We begin with the raw amino-acid sequence, 207 residues long: 2,3-bisphosphoglycerate-dependent phosphoglycerate mutase (207 aa).

Substrate is bound by residues 9–16 (RHGQSDWN), 22–23 (TG), Arg61, 88–91 (ERDY), Lys99, 115–116 (RR), and 159–160 (GN). The Tele-phosphohistidine intermediate role is filled by His10. Glu88 functions as the Proton donor/acceptor in the catalytic mechanism.

Belongs to the phosphoglycerate mutase family. BPG-dependent PGAM subfamily. Homodimer.

The enzyme catalyses (2R)-2-phosphoglycerate = (2R)-3-phosphoglycerate. Its pathway is carbohydrate degradation; glycolysis; pyruvate from D-glyceraldehyde 3-phosphate: step 3/5. Its function is as follows. Catalyzes the interconversion of 2-phosphoglycerate and 3-phosphoglycerate. The chain is 2,3-bisphosphoglycerate-dependent phosphoglycerate mutase from Beijerinckia indica subsp. indica (strain ATCC 9039 / DSM 1715 / NCIMB 8712).